Consider the following 167-residue polypeptide: Homeobox protein EgHBX3 (167 aa).

The homeobox DNA-binding region spans serine 80–phenylalanine 139.

The protein belongs to the NK-2 homeobox family.

Its subcellular location is the nucleus. This chain is Homeobox protein EgHBX3 (HBX3), found in Echinococcus granulosus (Hydatid tapeworm).